The primary structure comprises 381 residues: tRNA pseudouridine synthase D (381 aa).

The Nucleophile role is filled by D81. Residues 160-335 (GMPNYFGSQR…TLGSRRFFWV (176 aa)) form the TRUD domain.

This sequence belongs to the pseudouridine synthase TruD family.

It carries out the reaction uridine(13) in tRNA = pseudouridine(13) in tRNA. Functionally, responsible for synthesis of pseudouridine from uracil-13 in transfer RNAs. This Helicobacter acinonychis (strain Sheeba) protein is tRNA pseudouridine synthase D.